A 280-amino-acid polypeptide reads, in one-letter code: Myb family transcription factor PHL11 (280 aa).

In terms of domain architecture, HTH myb-type spans 20–80; sequence RDPKPRLRWT…HLQKYRLGQQ (61 aa). Residues 51 to 76 constitute a DNA-binding region (H-T-H motif); the sequence is PKSVLKLMGLKGLTLYHLKSHLQKYR. The segment at 77–98 is disordered; sequence LGQQQGKKQNRTEQNKENAGSS. Residues 129 to 149 are coiled coil; the sequence is AEAMRHQVDAQQRFQEQLEVQ. Positions 142 to 147 match the LHEQLE motif; that stretch reads FQEQLE.

Belongs to the MYB-CC family.

The protein localises to the nucleus. This Arabidopsis thaliana (Mouse-ear cress) protein is Myb family transcription factor PHL11.